The primary structure comprises 368 residues: MPFLWLCWALWALSLVSLREALTGEQILGSLLQQLQLDQPPVLDKADVEGMVIPSHVRTQYVALLQHSHASRSRGKRFSQNLREVAGRFLVSETSTHLLVFGMEQRLPPNSELVQAVLRLFQEPVPRTALRRQKRLSPHSARARVTIEWLRFRDDGSNRTALIDSRLVSIHESGWKAFDVTEAVNFWQQLSRPRQPLLLQVSVQREHLGPGTWSSHKLVRFAAQGTPDGKGQGEPQLELHTLDLKDYGAQGNCDPEAPVTEGTRCCRQEMYLDLQGMKWAENWILEPPGFLTYECVGSCLQLPESLTSRWPFLGPRQCVASEMTSLPMIVSVKEGGRTRPQVVSLPNMRVQTCSCASDGALIPRRLQP.

Positions 1–21 (MPFLWLCWALWALSLVSLREA) are cleaved as a signal peptide. A propeptide spans 22–76 (LTGEQILGSLLQQLQLDQPPVLDKADVEGMVIPSHVRTQYVALLQHSHASRSRGK) (or 135). A glycan (N-linked (GlcNAc...) asparagine) is linked at Asn158. Disulfide bonds link Cys253-Cys266, Cys265-Cys318, Cys295-Cys353, and Cys299-Cys355.

The protein belongs to the TGF-beta family. Post-translationally, the processing of the protein may also occur at the second R-X-X-R site located at AA 132-135. Processing appears to be regulated in a cell-type specific manner.

It localises to the secreted. Its function is as follows. Required for left-right axis determination as a regulator of LEFTY2 and NODAL. In Mus musculus (Mouse), this protein is Left-right determination factor 1 (Lefty1).